A 189-amino-acid chain; its full sequence is UPF0316 protein Sca_1484 (189 aa).

Transmembrane regions (helical) follow at residues 8–28, 40–60, and 66–86; these read PWLMLLAIFVINVAYVTCLTV, VAAAVSFIEVLIYIIGLGLVM, and FQNIIAYALGFSVGIIVGMKI.

The protein belongs to the UPF0316 family.

It localises to the cell membrane. In Staphylococcus carnosus (strain TM300), this protein is UPF0316 protein Sca_1484.